Consider the following 237-residue polypeptide: Sugar fermentation stimulation protein homolog (237 aa).

The protein belongs to the SfsA family.

This Pseudomonas putida (strain ATCC 47054 / DSM 6125 / CFBP 8728 / NCIMB 11950 / KT2440) protein is Sugar fermentation stimulation protein homolog.